We begin with the raw amino-acid sequence, 218 residues long: Uracil-DNA glycosylase (218 aa).

The Proton acceptor role is filled by D59.

The protein belongs to the uracil-DNA glycosylase (UDG) superfamily. UNG family.

The protein localises to the cytoplasm. It carries out the reaction Hydrolyzes single-stranded DNA or mismatched double-stranded DNA and polynucleotides, releasing free uracil.. In terms of biological role, excises uracil residues from the DNA which can arise as a result of misincorporation of dUMP residues by DNA polymerase or due to deamination of cytosine. This Staphylococcus aureus (strain bovine RF122 / ET3-1) protein is Uracil-DNA glycosylase.